Here is a 196-residue protein sequence, read N- to C-terminus: Nucleoid occlusion factor SlmA (196 aa).

The region spanning 7 to 68 (TNRREEILQA…GLIEFIEDSI (62 aa)) is the HTH tetR-type domain. The segment at residues 31–50 (TTAKLAAQVGVSEAALYRHF) is a DNA-binding region (H-T-H motif). Residues 115-142 (EQDRLQSRINQLFERIETQLRQVLRERK) are a coiled coil.

The protein belongs to the nucleoid occlusion factor SlmA family. As to quaternary structure, homodimer. Interacts with FtsZ.

It is found in the cytoplasm. It localises to the nucleoid. Its function is as follows. Required for nucleoid occlusion (NO) phenomenon, which prevents Z-ring formation and cell division over the nucleoid. Acts as a DNA-associated cell division inhibitor that binds simultaneously chromosomal DNA and FtsZ, and disrupts the assembly of FtsZ polymers. SlmA-DNA-binding sequences (SBS) are dispersed on non-Ter regions of the chromosome, preventing FtsZ polymerization at these regions. The chain is Nucleoid occlusion factor SlmA from Photobacterium profundum (strain SS9).